The chain runs to 497 residues: Low affinity K(+) transporter 1 (497 aa).

Over 1 to 29 (MFNHDWKYSINSKTFADLNIELFRNHKFK) the chain is Extracellular. A helical transmembrane segment spans residues 30–50 (TVLNYIIGVVGWNGLKLALFV). The Cytoplasmic segment spans residues 51–80 (SDIYTCIKLLAFNSWSNNIIKPYLPFKISK). A helical transmembrane segment spans residues 81-101 (WLFSGCILASIVLLIWEAIAG). The Extracellular segment spans residues 102 to 216 (MRIYKTGNIS…TNHEEAVILS (115 aa)). A helical transmembrane segment spans residues 217 to 237 (LMLFSFIIWALFVFKFLLAVI). At 238 to 497 (CSIFVYYKII…EDEDRTYNYT (260 aa)) the chain is on the cytoplasmic side. Serine 291 and serine 319 each carry phosphoserine. The disordered stretch occupies residues 420–469 (EFHGPLDSMPNTTNNIRNFNSNSSRPRPPPLQTKSSINSKADSNDNGRIY). Residues 429-444 (PNTTNNIRNFNSNSSR) are compositionally biased toward low complexity. The segment covering 451–465 (QTKSSINSKADSNDN) has biased composition (polar residues).

It belongs to the KCH1 low affinity K(+) transporter family.

Its subcellular location is the vacuole membrane. The protein resides in the cell membrane. It catalyses the reaction K(+)(in) = K(+)(out). Low affinity potassium transporter that, with PRM6/KCH2, participates in high-affinity Ca(2+) influx system (HACS) activation during the response to mating pheromone. Directly promotes K(+) influx and HACS may electrochemically respond to this K(+) influx. KCH1 and KCH2 act at the apex of the calcium signaling pathway that is used for survival during prolonged exposures to mating pheromones. This chain is Low affinity K(+) transporter 1, found in Saccharomyces cerevisiae (strain ATCC 204508 / S288c) (Baker's yeast).